Here is a 910-residue protein sequence, read N- to C-terminus: Protein translocase subunit SecA (910 aa).

ATP is bound by residues Q86, 104–108, and D508; that span reads GEGKT. 4 residues coordinate Zn(2+): C894, C896, C905, and C906.

Belongs to the SecA family. Monomer and homodimer. Part of the essential Sec protein translocation apparatus which comprises SecA, SecYEG and auxiliary proteins SecDF. Other proteins may also be involved. Zn(2+) serves as cofactor.

It localises to the cell membrane. It is found in the cytoplasm. It catalyses the reaction ATP + H2O + cellular proteinSide 1 = ADP + phosphate + cellular proteinSide 2.. Functionally, part of the Sec protein translocase complex. Interacts with the SecYEG preprotein conducting channel. Has a central role in coupling the hydrolysis of ATP to the transfer of proteins into and across the cell membrane, serving as an ATP-driven molecular motor driving the stepwise translocation of polypeptide chains across the membrane. In Acetivibrio thermocellus (strain ATCC 27405 / DSM 1237 / JCM 9322 / NBRC 103400 / NCIMB 10682 / NRRL B-4536 / VPI 7372) (Clostridium thermocellum), this protein is Protein translocase subunit SecA.